A 1079-amino-acid polypeptide reads, in one-letter code: Translation initiation factor IF-2 (1079 aa).

Composition is skewed to basic and acidic residues over residues 52 to 65 (VQAQ…KEGN), 75 to 90 (RDGD…KAPE), and 102 to 134 (APER…KEPQ). The disordered stretch occupies residues 52–488 (VQAQRDGGAR…RGKKDVRPAA (437 aa)). A compositionally biased stretch (low complexity) spans 150–184 (APVAKVVEAAPAETPAPEAPAVKATVTAEAAPAKT). Residues 185–194 (VEPESERPQA) are compositionally biased toward basic and acidic residues. Low complexity predominate over residues 276–291 (AAVAQQQMQQQAAQQQ). Residues 306–327 (GGYRPEGQREGGYRPEGQREGG) show a composition bias toward basic and acidic residues. Composition is skewed to low complexity over residues 348–370 (EGGY…GPRP) and 380–398 (PGAP…APRP). Positions 419 to 429 (PRPGGFGGAPG) are enriched in gly residues. The span at 461–471 (PRGRSDDDVMR) shows a compositional bias: basic and acidic residues. The segment covering 473–482 (PRGRGKRGKK) has biased composition (basic residues). Residues 578-745 (TRPPVVTIMG…LIAIQAEILE (168 aa)) form the tr-type G domain. Positions 587–594 (GHVDHGKT) are G1. GTP is bound at residue 587–594 (GHVDHGKT). Positions 612 to 616 (GITQH) are G2. The interval 633 to 636 (DTPG) is G3. Residues 633-637 (DTPGH) and 687-690 (NKMD) each bind GTP. Residues 687 to 690 (NKMD) form a G4 region. Residues 723–725 (SAK) form a G5 region.

It belongs to the TRAFAC class translation factor GTPase superfamily. Classic translation factor GTPase family. IF-2 subfamily.

The protein localises to the cytoplasm. In terms of biological role, one of the essential components for the initiation of protein synthesis. Protects formylmethionyl-tRNA from spontaneous hydrolysis and promotes its binding to the 30S ribosomal subunits. Also involved in the hydrolysis of GTP during the formation of the 70S ribosomal complex. This Nitratidesulfovibrio vulgaris (strain ATCC 29579 / DSM 644 / CCUG 34227 / NCIMB 8303 / VKM B-1760 / Hildenborough) (Desulfovibrio vulgaris) protein is Translation initiation factor IF-2.